The sequence spans 167 residues: cAMP-dependent protein kinase type I-alpha regulatory subunit (167 aa).

A Phosphothreonine modification is found at Thr-12. A phosphoserine mark is found at Ser-14 and Ser-20. The short motif at 30–33 (RGAI) is the Pseudophosphorylation motif element. Ser-34 bears the Phosphoserine mark. 3',5'-cyclic AMP contacts are provided by residues 51–78 (LFSH…SKVS), 79–167 (ILES…ILKR), Glu-147, and Arg-156. A Phosphoserine modification is found at Ser-82.

The protein belongs to the cAMP-dependent kinase regulatory chain family. In terms of assembly, the inactive holoenzyme is composed of two regulatory chains and two catalytic chains. Activation by cAMP releases the two active catalytic monomers and the regulatory dimer. Interacts with PRKACA and PRKACB. PRKAR1A also interacts with RFC2; the complex may be involved in cell survival. Interacts with AKAP4. Interacts with RARA; the interaction occurs in the presence of cAMP or FSH and regulates RARA transcriptional activity. Interacts with the phosphorylated form of PJA2. Interacts with CBFA2T3. Interacts with PRKX; regulates this cAMP-dependent protein kinase. Interacts with smAKAP; this interaction may target PRKAR1A to the plasma membrane. Interacts with AICDA. In terms of processing, the pseudophosphorylation site binds to the substrate-binding region of the catalytic chain, resulting in the inhibition of its activity.

It is found in the cell membrane. In terms of biological role, regulatory subunit of the cAMP-dependent protein kinases involved in cAMP signaling in cells. The polypeptide is cAMP-dependent protein kinase type I-alpha regulatory subunit (Mesocricetus auratus (Golden hamster)).